A 216-amino-acid polypeptide reads, in one-letter code: 2',3'-cyclic-nucleotide 3'-phosphodiesterase (216 aa).

The Proton donor/acceptor role is filled by H39. T41 serves as a coordination point for substrate. Catalysis depends on H153, which acts as the Proton donor/acceptor. 2 residues coordinate substrate: S155 and Y158.

The protein belongs to the 2H phosphoesterase superfamily. CPD1 family.

Its subcellular location is the golgi apparatus. The catalysed reaction is a nucleoside 2',3'-cyclic phosphate + H2O = a nucleoside 2'-phosphate + H(+). Involved in the metabolism of ADP-ribose 1',2'-cyclic phosphate which is produced as a consequence of tRNA splicing. The protein is 2',3'-cyclic-nucleotide 3'-phosphodiesterase (CPD1) of Yarrowia lipolytica (strain CLIB 122 / E 150) (Yeast).